Consider the following 257-residue polypeptide: Hydroxypyruvate/pyruvate aldolase (257 aa).

Residue H48 is the Proton acceptor of the active site. A divalent metal cation-binding residues include E152 and D178.

Belongs to the HpcH/HpaI aldolase family. It depends on a divalent metal cation as a cofactor.

It carries out the reaction D-glyceraldehyde + 3-hydroxypyruvate = 2-dehydro-D-gluconate. The enzyme catalyses D-glyceraldehyde + pyruvate = 2-dehydro-3-deoxy-L-galactonate. The catalysed reaction is 2-dehydro-3-deoxy-D-gluconate = D-glyceraldehyde + pyruvate. Aldolase which can catalyze in vitro the aldolisation reaction between hydroxypyruvate (HPA) or pyruvate (PA) and D-glyceraldehyde (D-GA). The condensation of hydroxypyruvate and D-glyceraldehyde produces 2-dehydro-D-gluconate as the major product. The condensation of pyruvate and D-glyceraldehyde produces 2-dehydro-3-deoxy-L-galactonate as the major product and 2-dehydro-3-deoxy-D-gluconate. This Roseovarius nubinhibens (strain ATCC BAA-591 / DSM 15170 / ISM) protein is Hydroxypyruvate/pyruvate aldolase.